We begin with the raw amino-acid sequence, 793 residues long: DNA mismatch repair protein MutS (793 aa).

589–596 (GPNMSGKS) is a binding site for ATP.

This sequence belongs to the DNA mismatch repair MutS family.

Functionally, this protein is involved in the repair of mismatches in DNA. It is possible that it carries out the mismatch recognition step. This protein has a weak ATPase activity. The protein is DNA mismatch repair protein MutS of Thermotoga sp. (strain RQ2).